A 668-amino-acid chain; its full sequence is Metal reductase (668 aa).

Residues 23–25 (PMH), glycine 57, glutamine 98, arginine 216, arginine 290, and 312–313 (AR) contribute to the FMN site. [4Fe-4S] cluster-binding residues include cysteine 336 and cysteine 339. Glutamine 341 is an FAD binding site. Residues cysteine 343 and cysteine 355 each coordinate [4Fe-4S] cluster. FAD-binding residues include alanine 386, glutamate 405, glutamine 413, arginine 423, and alanine 450.

This sequence in the N-terminal section; belongs to the NADH:flavin oxidoreductase/NADH oxidase family. As to quaternary structure, homotetramer. Requires FMN as cofactor. FAD serves as cofactor. [4Fe-4S] cluster is required as a cofactor.

It localises to the cytoplasm. Metal reductase able to reduce Fe(III)-chelates to Fe(II)-chelates, as well as soluble Cr(VI) and U(VI), using NADH as electron donor. Cannot use NADPH as an electron donor. Is unable to reduce riboflavin and FMN with NADH as electron donor. May have an in vivo role in metal reduction in D.reducens, which is an organism capable of reducing contaminant heavy metals and radionuclides. This Desulforamulus reducens (strain ATCC BAA-1160 / DSM 100696 / MI-1) (Desulfotomaculum reducens) protein is Metal reductase.